The primary structure comprises 269 residues: JmjC domain-containing protein 8 (269 aa).

The first 24 residues, 1-24, serve as a signal peptide directing secretion; it reads MAAAGRRGLLLLFVLWMMVTVILP. N-linked (GlcNAc...) asparagine glycans are attached at residues N135, N145, and N214. The JmjC domain maps to 136–269; it reads DTLYFFGDNN…TSVFISTFLG (134 aa).

Oligomer. Dimer. Interacts with PKM; regulates angiogenesis and metabolism. Post-translationally, N-glycosylated.

It localises to the endoplasmic reticulum lumen. Its subcellular location is the cytoplasm. In terms of biological role, functions as a positive regulator of TNF-induced NF-kappaB signaling. Regulates angiogenesis and cellular metabolism through interaction with PKM. The polypeptide is JmjC domain-containing protein 8 (Mus musculus (Mouse)).